Reading from the N-terminus, the 243-residue chain is Voltage-gated monoatomic cation channel TMEM109 (243 aa).

The first 33 residues, 1-33, serve as a signal peptide directing secretion; sequence MAASSISSPWGKHVFKAILMVLVALILLHSALA. Residues 34 to 83 lie on the Lumenal side of the membrane; sequence QSRRDFAPPGQQKREAPVDVLTQIGRSVRGTLDAWIGPETMHLVSESSSQ. Residues 84–104 traverse the membrane as a helical segment; the sequence is VLWAISSAISVAFFALSGIAA. Residues 105–135 lie on the Cytoplasmic side of the membrane; that stretch reads QLLNALGLAGDYLAQGLKLSPGQVQTFLLWG. The chain crosses the membrane as a helical span at residues 136–156; the sequence is AGALVVYWLLSLLLGLVLALL. The Lumenal segment spans residues 157-185; sequence GRILWGLKLVIFLAGFVALMRSVPDPSTR. The chain crosses the membrane as a helical span at residues 186 to 205; sequence ALLLLALLILYALLSRLTGS. At 206-243 the chain is on the cytoplasmic side; it reads RASGAQLEAKVRGLERQVEELRWRQRRAAKGARSVEEE.

As to quaternary structure, homooligomer. Interacts with CRYAB; in the cellular response to DNA damage.

It is found in the nucleus outer membrane. It localises to the endoplasmic reticulum membrane. Its subcellular location is the sarcoplasmic reticulum membrane. It catalyses the reaction K(+)(in) = K(+)(out). The enzyme catalyses Ca(2+)(in) = Ca(2+)(out). Its function is as follows. Functions as a voltage-gated monoatomic cation channel permeable to both potassium and calcium. Plays a role in the cellular response to DNA damage. This is Voltage-gated monoatomic cation channel TMEM109 from Homo sapiens (Human).